Here is a 61-residue protein sequence, read N- to C-terminus: Small ribosomal subunit protein uS14B (61 aa).

Residues Cys-24, Cys-27, Cys-40, and Cys-43 each coordinate Zn(2+).

This sequence belongs to the universal ribosomal protein uS14 family. Zinc-binding uS14 subfamily. As to quaternary structure, part of the 30S ribosomal subunit. Contacts proteins S3 and S10. Zn(2+) is required as a cofactor.

Functionally, binds 16S rRNA, required for the assembly of 30S particles and may also be responsible for determining the conformation of the 16S rRNA at the A site. The chain is Small ribosomal subunit protein uS14B from Staphylococcus epidermidis (strain ATCC 35984 / DSM 28319 / BCRC 17069 / CCUG 31568 / BM 3577 / RP62A).